The sequence spans 622 residues: Probable methionine--tRNA ligase, mitochondrial (622 aa).

The short motif at 67–79 is the 'HIGH' region element; sequence PIFYVNASPHVGH. Residues 366-370 carry the 'KMSKS' region motif; it reads KMSKS. Lysine 369 contacts ATP. Residues 592-622 are disordered; that stretch reads LDDIKGMGPDAGSKKHSSGNKPSSGNKKPTA. Over residues 610 to 622 the composition is skewed to low complexity; the sequence is GNKPSSGNKKPTA.

Belongs to the class-I aminoacyl-tRNA synthetase family.

The protein resides in the mitochondrion matrix. The enzyme catalyses tRNA(Met) + L-methionine + ATP = L-methionyl-tRNA(Met) + AMP + diphosphate. The protein is Probable methionine--tRNA ligase, mitochondrial of Neurospora crassa (strain ATCC 24698 / 74-OR23-1A / CBS 708.71 / DSM 1257 / FGSC 987).